Here is a 160-residue protein sequence, read N- to C-terminus: SsrA-binding protein (160 aa).

Positions 132 to 160 (KEFDKRDTMRERDSNRELQRAVRNKGKEE) are disordered.

This sequence belongs to the SmpB family.

Its subcellular location is the cytoplasm. Functionally, required for rescue of stalled ribosomes mediated by trans-translation. Binds to transfer-messenger RNA (tmRNA), required for stable association of tmRNA with ribosomes. tmRNA and SmpB together mimic tRNA shape, replacing the anticodon stem-loop with SmpB. tmRNA is encoded by the ssrA gene; the 2 termini fold to resemble tRNA(Ala) and it encodes a 'tag peptide', a short internal open reading frame. During trans-translation Ala-aminoacylated tmRNA acts like a tRNA, entering the A-site of stalled ribosomes, displacing the stalled mRNA. The ribosome then switches to translate the ORF on the tmRNA; the nascent peptide is terminated with the 'tag peptide' encoded by the tmRNA and targeted for degradation. The ribosome is freed to recommence translation, which seems to be the essential function of trans-translation. The polypeptide is SsrA-binding protein (Pseudomonas putida (strain ATCC 47054 / DSM 6125 / CFBP 8728 / NCIMB 11950 / KT2440)).